A 387-amino-acid polypeptide reads, in one-letter code: MHPCSSVLHLLLRCMRGCCRHTRSRVPRRLRRHVSYIRLIFKSLYFNSLTNSDVVTDSILEPVFWMVEVVTRWFGMVFVFLVVALTSSVVFIAYFCLLPLVLHTYSPGWMIWHICYGHWNLVMIVFHYYKATKTPPGYPPKMKTDVPFVSVCKKCIIPKPARSHHCGICKTCILKMDHHCPWLNNCVGHFNHRYFFSFCLFLTLGCMYCSVSGRHLFIDAYNTIDQLKHLEAEKQGVPVTGIGLLIGIVPSAGVAGKAVQVAQEVSQPPYTYKDRMFHKSVIYMWVLTSTVSVALGALTLWHALLITRGETSIERHINGKEAKRLAKRGRVYRNPFSYGKLNNWKVFFGVEKRSHWLTRVLLPSGHAPYGDGLTWDIYPLKKDMMPV.

A run of 2 helical transmembrane segments spans residues 73 to 93 (WFGM…VFIA) and 106 to 126 (SPGW…MIVF). The DHHC domain maps to 150–200 (SVCKKCIIPKPARSHHCGICKTCILKMDHHCPWLNNCVGHFNHRYFFSFCL). Residue Cys-180 is the S-palmitoyl cysteine intermediate of the active site. A run of 3 helical transmembrane segments spans residues 198–218 (FCLF…HLFI), 236–256 (GVPV…GVAG), and 281–301 (VIYM…LTLW).

The protein belongs to the DHHC palmitoyltransferase family. As to expression, expressed in the central nervous system (CNS). Expressed in the developing forebrain, and especially in the telencephalon.

It localises to the endoplasmic reticulum membrane. The catalysed reaction is L-cysteinyl-[protein] + hexadecanoyl-CoA = S-hexadecanoyl-L-cysteinyl-[protein] + CoA. Palmitoyl acyltransferase that mediates palmitoylation of proteins and is required during embryonic heart development. Involved in the proliferation of neural stem cells by regulating the FGF/ERK pathway. Involved in the proliferation of neural stem cells by regulating the FGF/ERK pathway. The protein is Palmitoyltransferase ZDHHC16A of Danio rerio (Zebrafish).